Reading from the N-terminus, the 305-residue chain is UDP-3-O-acyl-N-acetylglucosamine deacetylase (305 aa).

Zn(2+) is bound by residues His-79, His-238, and Asp-242. His-265 functions as the Proton donor in the catalytic mechanism.

The protein belongs to the LpxC family. Requires Zn(2+) as cofactor.

It carries out the reaction a UDP-3-O-[(3R)-3-hydroxyacyl]-N-acetyl-alpha-D-glucosamine + H2O = a UDP-3-O-[(3R)-3-hydroxyacyl]-alpha-D-glucosamine + acetate. Its pathway is glycolipid biosynthesis; lipid IV(A) biosynthesis; lipid IV(A) from (3R)-3-hydroxytetradecanoyl-[acyl-carrier-protein] and UDP-N-acetyl-alpha-D-glucosamine: step 2/6. In terms of biological role, catalyzes the hydrolysis of UDP-3-O-myristoyl-N-acetylglucosamine to form UDP-3-O-myristoylglucosamine and acetate, the committed step in lipid A biosynthesis. This Shigella boydii serotype 4 (strain Sb227) protein is UDP-3-O-acyl-N-acetylglucosamine deacetylase.